A 256-amino-acid polypeptide reads, in one-letter code: Thiazole synthase (256 aa).

The active-site Schiff-base intermediate with DXP is the K95. Residues G156, A182–G183, and N204–T205 each bind 1-deoxy-D-xylulose 5-phosphate.

This sequence belongs to the ThiG family. Homotetramer. Forms heterodimers with either ThiH or ThiS.

The protein localises to the cytoplasm. It catalyses the reaction [ThiS sulfur-carrier protein]-C-terminal-Gly-aminoethanethioate + 2-iminoacetate + 1-deoxy-D-xylulose 5-phosphate = [ThiS sulfur-carrier protein]-C-terminal Gly-Gly + 2-[(2R,5Z)-2-carboxy-4-methylthiazol-5(2H)-ylidene]ethyl phosphate + 2 H2O + H(+). The protein operates within cofactor biosynthesis; thiamine diphosphate biosynthesis. Functionally, catalyzes the rearrangement of 1-deoxy-D-xylulose 5-phosphate (DXP) to produce the thiazole phosphate moiety of thiamine. Sulfur is provided by the thiocarboxylate moiety of the carrier protein ThiS. In vitro, sulfur can be provided by H(2)S. The sequence is that of Thiazole synthase from Salmonella enteritidis PT4 (strain P125109).